A 133-amino-acid chain; its full sequence is Probable mitochondrial pyruvate carrier 2 (133 aa).

The next 3 helical transmembrane spans lie at 39-55, 73-91, and 99-116; these read VTNLAPMMKWSLSIVPI, ASSLCATGSIWTYYATLIS, and MLAACNAAMAACHGYNIY.

This sequence belongs to the mitochondrial pyruvate carrier (MPC) (TC 2.A.105) family.

The protein resides in the mitochondrion inner membrane. Its function is as follows. May mediate the uptake of pyruvate into mitochondria. This chain is Probable mitochondrial pyruvate carrier 2, found in Dictyostelium discoideum (Social amoeba).